The following is a 224-amino-acid chain: Metalloproteinase inhibitor 4 (224 aa).

Residues Met-1 to Ala-29 form the signal peptide. Residue Cys-30 participates in Zn(2+) binding. Involved in metalloproteinase-binding regions lie at residues Cys-30–Ala-33 and Ser-99–Ser-100. 6 disulfide bridges follow: Cys-30–Cys-102, Cys-32–Cys-131, Cys-42–Cys-156, Cys-158–Cys-205, Cys-163–Cys-168, and Cys-176–Cys-197. An NTR domain is found at Cys-30–Cys-156.

The protein belongs to the protease inhibitor I35 (TIMP) family.

It localises to the secreted. Its function is as follows. Complexes with metalloproteinases (such as collagenases) and irreversibly inactivates them by binding to their catalytic zinc cofactor. This chain is Metalloproteinase inhibitor 4 (TIMP4), found in Bos taurus (Bovine).